The primary structure comprises 154 residues: MAL-like protein (154 aa).

4 consecutive transmembrane segments (helical) span residues 24–44, 61–81, 99–119, and 131–151; these read LFLT…FWVW, VLYV…SYLF, GTTG…TIIS, and VAAS…AFSI. An MARVEL domain is found at 24-154; the sequence is LFLTIPFAFF…ILHAFSIYYH (131 aa).

The protein belongs to the MAL family.

It localises to the membrane. The sequence is that of MAL-like protein (Mall) from Mus musculus (Mouse).